The chain runs to 378 residues: Flap endonuclease 1 (378 aa).

The tract at residues 1–102 is N-domain; the sequence is MGIHGLAKLI…GELAKRSERR (102 aa). The residue at position 19 (Arg19) is a Symmetric dimethylarginine; by PRMT5. Asp34 lines the Mg(2+) pocket. DNA contacts are provided by Arg47 and Arg69. At Lys78 the chain carries N6-acetyllysine. Asp84 provides a ligand contact to Mg(2+). Arg98 and Arg102 each carry symmetric dimethylarginine; by PRMT5. The I-domain stretch occupies residues 120-251; it reads EVEKFTKRLV…KRAVDLIQKH (132 aa). Positions 156, 158, 177, and 179 each coordinate Mg(2+). Glu156 is a DNA binding site. Ser185 is modified (phosphoserine; by CDK2). Arg190 bears the Symmetric dimethylarginine; by PRMT5 mark. Ser195 carries the post-translational modification Phosphoserine. Residues Gly229 and Asp231 each contribute to the DNA site. Asp231 is a binding site for Mg(2+). Phosphoserine occurs at positions 253, 291, and 333. The interval 325–378 is disordered; that stretch reads RLSKSRQGSTQGRLDDFFKVTGSLSSAKRKEPEPKGPAKKKAKTGGAGKFRRGK. Thr334 carries the post-translational modification Phosphothreonine. Residues 334–342 form an interaction with PCNA region; the sequence is TQGRLDDFF. Residues Lys352, Lys373, and Lys378 each carry the N6-acetyllysine modification. Positions 361-378 are enriched in basic residues; that stretch reads PAKKKAKTGGAGKFRRGK.

The protein belongs to the XPG/RAD2 endonuclease family. FEN1 subfamily. As to quaternary structure, interacts with PCNA. Three molecules of FEN1 bind to one PCNA trimer with each molecule binding to one PCNA monomer. PCNA stimulates the nuclease activity without altering cleavage specificity. The C-terminal domain binds EP300; can bind simultaneously to both PCNA and EP300. Interacts with DDX11; this interaction is direct and increases flap endonuclease activity of FEN1. Interacts with WDR4; regulating its endonuclease activity. Interacts with POLB. Requires Mg(2+) as cofactor. Acetylated by EP300. Acetylation inhibits both endonuclease and exonuclease activity. Acetylation also reduces DNA-binding activity but does not affect interaction with PCNA or EP300. Post-translationally, phosphorylation upon DNA damage induces relocalization to the nuclear plasma. Phosphorylation at Ser-185 by CDK2 occurs during late S-phase and results in dissociation from PCNA. In terms of processing, methylation at Arg-190 by PRMT5 impedes Ser-185 phosphorylation and increases interaction with PCNA.

It is found in the nucleus. Its subcellular location is the nucleolus. The protein resides in the nucleoplasm. It localises to the mitochondrion. In terms of biological role, structure-specific nuclease with 5'-flap endonuclease and 5'-3' exonuclease activities involved in DNA replication and repair. During DNA replication, cleaves the 5'-overhanging flap structure that is generated by displacement synthesis when DNA polymerase encounters the 5'-end of a downstream Okazaki fragment. It enters the flap from the 5'-end and then tracks to cleave the flap base, leaving a nick for ligation. Also involved in the long patch base excision repair (LP-BER) pathway, by cleaving within the apurinic/apyrimidinic (AP) site-terminated flap. Acts as a genome stabilization factor that prevents flaps from equilibrating into structures that lead to duplications and deletions. Also possesses 5'-3' exonuclease activity on nicked or gapped double-stranded DNA, and exhibits RNase H activity. Also involved in replication and repair of rDNA and in repairing mitochondrial DNA. This Mus musculus (Mouse) protein is Flap endonuclease 1.